The chain runs to 290 residues: 33 kDa chaperonin (290 aa).

Cystine bridges form between Cys235/Cys237 and Cys268/Cys271.

The protein belongs to the HSP33 family. Post-translationally, under oxidizing conditions two disulfide bonds are formed involving the reactive cysteines. Under reducing conditions zinc is bound to the reactive cysteines and the protein is inactive.

It localises to the cytoplasm. Functionally, redox regulated molecular chaperone. Protects both thermally unfolding and oxidatively damaged proteins from irreversible aggregation. Plays an important role in the bacterial defense system toward oxidative stress. This Streptococcus pneumoniae serotype 19F (strain G54) protein is 33 kDa chaperonin.